Reading from the N-terminus, the 71-residue chain is MIVPVRCFTCGKVIGNKWDTYLELLQADYAEGDALDALGLVRYCCRRMLMTHVDLIEKLLNYNTMEKSDPN.

Zn(2+) contacts are provided by Cys-7, Cys-10, Cys-44, and Cys-45.

This sequence belongs to the archaeal Rpo10/eukaryotic RPB10 RNA polymerase subunit family. As to quaternary structure, interacts with IYO.

Its subcellular location is the nucleus. This Arabidopsis thaliana (Mouse-ear cress) protein is DNA-directed RNA polymerase subunit 10-like protein.